The sequence spans 104 residues: uncharacterized protein (104 aa).

Residues 62-92 are disordered; the sequence is SSPAASSHPRKRGKEKKERTPTERLAAPARK.

This is an uncharacterized protein from Human adenovirus B serotype 7 (HAdV-7).